The following is a 335-amino-acid chain: Methylthioribose-1-phosphate isomerase (335 aa).

Substrate contacts are provided by residues 47–49 (RGA), Arg81, and Gln184. The active-site Proton donor is the Asp225. Residue 235-236 (NK) coordinates substrate.

It belongs to the eIF-2B alpha/beta/delta subunits family. MtnA subfamily.

The enzyme catalyses 5-(methylsulfanyl)-alpha-D-ribose 1-phosphate = 5-(methylsulfanyl)-D-ribulose 1-phosphate. Its pathway is amino-acid biosynthesis; L-methionine biosynthesis via salvage pathway; L-methionine from S-methyl-5-thio-alpha-D-ribose 1-phosphate: step 1/6. Its function is as follows. Catalyzes the interconversion of methylthioribose-1-phosphate (MTR-1-P) into methylthioribulose-1-phosphate (MTRu-1-P). The protein is Methylthioribose-1-phosphate isomerase of Synechococcus sp. (strain CC9902).